We begin with the raw amino-acid sequence, 80 residues long: Conotoxin Bt6.5 (80 aa).

The signal sequence occupies residues 1 to 22 (MKLTCVLIIAVLFLTACQLATA). Positions 23-45 (KTYSTGRQKHRALRSTDKNIKLS) are excised as a propeptide. 3 disulfides stabilise this stretch: Cys48–Cys62, Cys55–Cys66, and Cys61–Cys73.

The protein belongs to the conotoxin O1 superfamily. In terms of tissue distribution, expressed by the venom duct.

Its subcellular location is the secreted. In terms of biological role, when injected intracranially in mice, induces a series of symptoms such as quivering, climbing, scratching, barrel rolling and paralysis of limbs. Unexpectedly, no effect is observed on ionic currents when tested on locust DUM neuron. This is Conotoxin Bt6.5 from Conus betulinus (Beech cone).